The sequence spans 215 residues: Ribonuclease T (215 aa).

The region spanning 20 to 194 (VVIDVETAGF…YDTLQTAKLF (175 aa)) is the Exonuclease domain. Positions 23, 25, 181, and 186 each coordinate Mg(2+). The Proton donor/acceptor role is filled by H181.

Belongs to the RNase T family. Homodimer. Requires Mg(2+) as cofactor.

Trims short 3' overhangs of a variety of RNA species, leaving a one or two nucleotide 3' overhang. Responsible for the end-turnover of tRNA: specifically removes the terminal AMP residue from uncharged tRNA (tRNA-C-C-A). Also appears to be involved in tRNA biosynthesis. The chain is Ribonuclease T from Yersinia pestis.